The primary structure comprises 350 residues: Arabinogalactan endo-beta-1,4-galactanase (350 aa).

Positions 1–16 (MFASLLLAALPLLTHA) are cleaved as a signal peptide. A glycan (N-linked (GlcNAc...) asparagine) is linked at N128. Catalysis depends on E152, which acts as the Proton donor. The active-site Nucleophile is the E262.

The protein belongs to the glycosyl hydrolase 53 family. Glycosylated.

The enzyme catalyses The enzyme specifically hydrolyzes (1-&gt;4)-beta-D-galactosidic linkages in type I arabinogalactans.. The chain is Arabinogalactan endo-beta-1,4-galactanase (gal1) from Aspergillus aculeatus.